Consider the following 107-residue polypeptide: Ig kappa chain V-VI region NQ6-8.3.1 (107 aa).

The interval 1-23 is framework-1; that stretch reads QIVLTQSPAIMSASPGQKVTMTC. Residues cysteine 23 and cysteine 87 are joined by a disulfide bond. Positions 24–33 are complementarity-determining-1; that stretch reads SASSSVSYMH. Positions 34–48 are framework-2; the sequence is WYQQKSGTSPKRWIY. The segment at 49 to 55 is complementarity-determining-2; that stretch reads DTSKLAS. Residues 56 to 87 form a framework-3 region; it reads GXPARFSGSGSATSYSLTITSMQAEDAATYYC. The segment at 88-96 is complementarity-determining-3; sequence QQWSSNPLT. Residues 97 to 106 form a framework-4 region; the sequence is FGAGTKLELK.

Its function is as follows. Anti-2-phenyl oxazolone (PHOX) Antibody. The polypeptide is Ig kappa chain V-VI region NQ6-8.3.1 (Mus musculus (Mouse)).